The following is a 248-amino-acid chain: Malonyl-[acyl-carrier protein] O-methyltransferase 2 (248 aa).

The protein belongs to the methyltransferase superfamily.

It carries out the reaction malonyl-[ACP] + S-adenosyl-L-methionine = malonyl-[ACP] methyl ester + S-adenosyl-L-homocysteine. Its pathway is cofactor biosynthesis; biotin biosynthesis. In terms of biological role, converts the free carboxyl group of a malonyl-thioester to its methyl ester by transfer of a methyl group from S-adenosyl-L-methionine (SAM). It allows to synthesize pimeloyl-ACP via the fatty acid synthetic pathway. This chain is Malonyl-[acyl-carrier protein] O-methyltransferase 2, found in Coxiella burnetii (strain RSA 493 / Nine Mile phase I).